The chain runs to 215 residues: MEIPAIQTEREDITSEKMAQINPLPVPLGPWKITVYDQENFQGKRMEFTSSCANIMECGFDNIRSLKVECGAWIGYEHTSFCGQQFVLERGEYPRWDAWSGSNAYHIERLMSFRPICSANHEESKLVIFEKENFIGRQRELCDDYPSLQAMGWGNNEVGSMKVQCGAWVCYQYPGYRGYQYILESDHHGGEYKHWREWGSHAQTFQIQSIRRIQQ.

The tract at residues 1-30 (MEIPAIQTEREDITSEKMAQINPLPVPLGP) is N-terminal arm. 2 Beta/gamma crystallin 'Greek key' domains span residues 31-70 (WKITVYDQENFQGKRMEFTSSCANIMECGFDNIRSLKVEC) and 71-117 (GAWI…RPIC). The segment at 118–123 (SANHEE) is connecting peptide. 2 Beta/gamma crystallin 'Greek key' domains span residues 124-165 (SKLV…KVQC) and 166-214 (GAWV…RRIQ).

It belongs to the beta/gamma-crystallin family. Homo/heterodimer, or complexes of higher-order. The structure of beta-crystallin oligomers seems to be stabilized through interactions between the N-terminal arms. In terms of processing, the N-terminus is blocked.

In terms of biological role, crystallins are the dominant structural components of the vertebrate eye lens. This Aquarana catesbeiana (American bullfrog) protein is Beta-crystallin A3-2.